Here is a 563-residue protein sequence, read N- to C-terminus: Nicalin (563 aa).

An N-terminal signal peptide occupies residues 1 to 29; the sequence is MQDEIIDFFRSPALLFYMTLMLTICVVNG. The Lumenal segment spans residues 30–522; sequence SQQVGEVVET…NRLVAERVKP (493 aa). An N-linked (GlcNAc...) asparagine glycan is attached at asparagine 232. Residues 523–543 traverse the membrane as a helical segment; sequence AVFELVIAAGVFTYLSAFYYI. Topologically, residues 544 to 563 are cytoplasmic; it reads ATHSQNTIEGTVAAIRKSIF.

This sequence belongs to the nicastrin family. May interact with the levamisole-sensitive nicotinic acetylcholine receptor (L-AChR). May interact with nra-4 in the ER. In terms of tissue distribution, expressed in body wall, pharyngeal, and vulval muscles, excretory canal cell, head and motor neurons, and vulval epithelium.

Its subcellular location is the endoplasmic reticulum membrane. Its function is as follows. Involved in the recognition and selection of protein complexes to exit the endoplasmic reticulum (ER). In muscles, regulates levamisole-sensitive nicotinic acetylcholine receptor (L-AChR) subunit composition, possibly by allowing only specific L-AChR subunit combinations to exit the ER. Specifically, may promote the inclusion of alpha subunits unc-38 and unc-29 into L-AChR. Regulates L-AChR sensitivity to agonists such as nicotine and levamisole at neuro-muscular junctions. In touch neurons, may prevent ER exit of incorrectly folded mec-4-mec-10 ion channel. The protein is Nicalin of Caenorhabditis elegans.